The primary structure comprises 154 residues: Phosphopantetheine adenylyltransferase (154 aa).

This sequence belongs to the eukaryotic CoaD family.

The protein resides in the cytoplasm. The catalysed reaction is (R)-4'-phosphopantetheine + ATP + H(+) = 3'-dephospho-CoA + diphosphate. Its pathway is cofactor biosynthesis; coenzyme A biosynthesis. In terms of biological role, reversibly transfers an adenylyl group from ATP to 4'-phosphopantetheine, yielding dephospho-CoA (dPCoA) and pyrophosphate. This chain is Phosphopantetheine adenylyltransferase, found in Methanosarcina mazei (strain ATCC BAA-159 / DSM 3647 / Goe1 / Go1 / JCM 11833 / OCM 88) (Methanosarcina frisia).